Consider the following 52-residue polypeptide: ATP synthase protein 8 (52 aa).

A helical transmembrane segment spans residues P6–N26.

It belongs to the ATPase protein 8 family. F-type ATPases have 2 components, CF(1) - the catalytic core - and CF(0) - the membrane proton channel.

It is found in the mitochondrion membrane. Its function is as follows. Mitochondrial membrane ATP synthase (F(1)F(0) ATP synthase or Complex V) produces ATP from ADP in the presence of a proton gradient across the membrane which is generated by electron transport complexes of the respiratory chain. F-type ATPases consist of two structural domains, F(1) - containing the extramembraneous catalytic core and F(0) - containing the membrane proton channel, linked together by a central stalk and a peripheral stalk. During catalysis, ATP synthesis in the catalytic domain of F(1) is coupled via a rotary mechanism of the central stalk subunits to proton translocation. Part of the complex F(0) domain. Minor subunit located with subunit a in the membrane. In Albinaria turrita (Door snail), this protein is ATP synthase protein 8 (MT-ATP8).